Reading from the N-terminus, the 420-residue chain is Arginine biosynthesis bifunctional protein ArgJ (420 aa).

Residues threonine 167, lysine 193, threonine 204, glutamate 284, asparagine 415, and threonine 420 each contribute to the substrate site. Threonine 204 functions as the Nucleophile in the catalytic mechanism.

The protein belongs to the ArgJ family. Heterotetramer of two alpha and two beta chains.

It localises to the cytoplasm. The catalysed reaction is N(2)-acetyl-L-ornithine + L-glutamate = N-acetyl-L-glutamate + L-ornithine. The enzyme catalyses L-glutamate + acetyl-CoA = N-acetyl-L-glutamate + CoA + H(+). It participates in amino-acid biosynthesis; L-arginine biosynthesis; L-ornithine and N-acetyl-L-glutamate from L-glutamate and N(2)-acetyl-L-ornithine (cyclic): step 1/1. Its pathway is amino-acid biosynthesis; L-arginine biosynthesis; N(2)-acetyl-L-ornithine from L-glutamate: step 1/4. Its function is as follows. Catalyzes two activities which are involved in the cyclic version of arginine biosynthesis: the synthesis of N-acetylglutamate from glutamate and acetyl-CoA as the acetyl donor, and of ornithine by transacetylation between N(2)-acetylornithine and glutamate. The protein is Arginine biosynthesis bifunctional protein ArgJ of Prochlorococcus marinus (strain NATL2A).